The following is a 245-amino-acid chain: Rhamnogalacturonan acetylesterase (245 aa).

Residues 1–17 (MKSIALTSLSLLPSALA) form the signal peptide. Ser26 (nucleophile) is an active-site residue. Cys100 and Cys108 are joined by a disulfide. Residues Asp204 and His207 contribute to the active site. A disulfide bridge connects residues Cys226 and Cys244.

This sequence belongs to the 'GDSL' lipolytic enzyme family.

It is found in the secreted. It catalyses the reaction Hydrolytic cleavage of 2-O-acetyl- or 3-O-acetyl groups of alpha-D-galacturonic acid in rhamnogalacturonan I.. Plays a key role in the degradation of rhamnogalacturonan in the cell wall. Involved in degradation of pectin. This chain is Rhamnogalacturonan acetylesterase, found in Emericella nidulans (strain FGSC A4 / ATCC 38163 / CBS 112.46 / NRRL 194 / M139) (Aspergillus nidulans).